A 113-amino-acid chain; its full sequence is Small ribosomal subunit protein uS17 (113 aa).

The protein belongs to the universal ribosomal protein uS17 family. Part of the 30S ribosomal subunit.

Its function is as follows. One of the primary rRNA binding proteins, it binds specifically to the 5'-end of 16S ribosomal RNA. This chain is Small ribosomal subunit protein uS17, found in Pyrococcus furiosus (strain ATCC 43587 / DSM 3638 / JCM 8422 / Vc1).